The following is a 313-amino-acid chain: Glucan 1,3-beta-glucosidase (313 aa).

The signal sequence occupies residues 1-23 (MRFSTTLATAATALFFTASQVSA). The active-site Proton donor is Glu124. Asn202 is a glycosylation site (N-linked (GlcNAc...) asparagine). The active-site Nucleophile is the Glu233. N-linked (GlcNAc...) asparagine glycosylation is present at Asn284.

The protein belongs to the glycosyl hydrolase 17 family.

It is found in the secreted. The protein localises to the cell wall. The enzyme catalyses Successive hydrolysis of beta-D-glucose units from the non-reducing ends of (1-&gt;3)-beta-D-glucans, releasing alpha-glucose.. In terms of biological role, glucanases possibly play a role in cell expansion during growth, in cell-cell fusion during mating, and in spore release during sporulation. This enzyme may be involved in beta-glucan degradation and also function biosynthetically as a transglycosylase. The chain is Glucan 1,3-beta-glucosidase (BGL2) from Saccharomyces cerevisiae (strain ATCC 204508 / S288c) (Baker's yeast).